We begin with the raw amino-acid sequence, 177 residues long: N5-carboxyaminoimidazole ribonucleotide mutase (177 aa).

Residues S18, D21, and R48 each contribute to the substrate site.

The protein belongs to the AIR carboxylase family. Class I subfamily.

The enzyme catalyses 5-carboxyamino-1-(5-phospho-D-ribosyl)imidazole + H(+) = 5-amino-1-(5-phospho-D-ribosyl)imidazole-4-carboxylate. The protein operates within purine metabolism; IMP biosynthesis via de novo pathway; 5-amino-1-(5-phospho-D-ribosyl)imidazole-4-carboxylate from 5-amino-1-(5-phospho-D-ribosyl)imidazole (N5-CAIR route): step 2/2. Its function is as follows. Catalyzes the conversion of N5-carboxyaminoimidazole ribonucleotide (N5-CAIR) to 4-carboxy-5-aminoimidazole ribonucleotide (CAIR). The chain is N5-carboxyaminoimidazole ribonucleotide mutase from Pyrococcus horikoshii (strain ATCC 700860 / DSM 12428 / JCM 9974 / NBRC 100139 / OT-3).